The sequence spans 149 residues: Histidine-containing phosphotransfer protein 2 (149 aa).

The HPt domain maps to 39 to 144 (TPGFVSEVVT…LQLEQQIQAY (106 aa)). His-80 carries the post-translational modification Phosphohistidine.

Post-translationally, two-component system major event consists of a His-to-Asp phosphorelay between a sensor histidine kinase (HK) and a response regulator (RR). In plants, the His-to-Asp phosphorelay involves an additional intermediate named Histidine-containing phosphotransfer protein (HPt). This multistep phosphorelay consists of a His-Asp-His-Asp sequential transfer of a phosphate group between first a His and an Asp of the HK protein, followed by the transfer to a conserved His of the HPt protein and finally the transfer to an Asp in the receiver domain of the RR protein. In terms of tissue distribution, widely expressed.

It is found in the cytoplasm. Its subcellular location is the cytosol. It localises to the nucleus. Functionally, functions as a two-component phosphorelay mediators between cytokinin sensor histidine kinases and response regulators (B-type ARRs). Plays an important role in propagating cytokinin signal transduction through the multistep His-to-Asp phosphorelay. Functions as a positive regulator of the cytokinin signaling pathway. May play a regulatory role in salt and drought tolerance during plant development. This chain is Histidine-containing phosphotransfer protein 2, found in Oryza sativa subsp. japonica (Rice).